A 62-amino-acid chain; its full sequence is Disintegrin schistatin-like subunit A (62 aa).

Residues 1 to 62 (SVNPCCDPVI…TTDCPRNRYN (62 aa)) enclose the Disintegrin domain. Disulfide bonds link cysteine 5–cysteine 28, cysteine 19–cysteine 25, cysteine 24–cysteine 49, and cysteine 37–cysteine 56. The Cell attachment site signature appears at 41–43 (RGD).

This sequence belongs to the disintegrin family. Dimeric disintegrin subfamily. As to quaternary structure, heterodimer with subunit B; disulfide-linked. As to expression, expressed by the venom gland.

The protein resides in the secreted. Functionally, may bind to both alpha-IIb/beta-3 (ITGA2B/ITGB3) and alpha-V/beta-3 (ITGAV/ITGB3) integrins, and may inhibit platelet aggregation. This Echis carinatus (Saw-scaled viper) protein is Disintegrin schistatin-like subunit A.